We begin with the raw amino-acid sequence, 157 residues long: Endoribonuclease YbeY (157 aa).

3 residues coordinate Zn(2+): His114, His118, and His124.

It belongs to the endoribonuclease YbeY family. Requires Zn(2+) as cofactor.

It is found in the cytoplasm. Its function is as follows. Single strand-specific metallo-endoribonuclease involved in late-stage 70S ribosome quality control and in maturation of the 3' terminus of the 16S rRNA. The polypeptide is Endoribonuclease YbeY (Edwardsiella ictaluri (strain 93-146)).